The primary structure comprises 664 residues: Fructose-1,6-bisphosphatase class 3 (664 aa).

This sequence belongs to the FBPase class 3 family. Requires Mn(2+) as cofactor.

It catalyses the reaction beta-D-fructose 1,6-bisphosphate + H2O = beta-D-fructose 6-phosphate + phosphate. It participates in carbohydrate biosynthesis; gluconeogenesis. The polypeptide is Fructose-1,6-bisphosphatase class 3 (Bacteroides thetaiotaomicron (strain ATCC 29148 / DSM 2079 / JCM 5827 / CCUG 10774 / NCTC 10582 / VPI-5482 / E50)).